A 246-amino-acid polypeptide reads, in one-letter code: Bromelain inhibitor (246 aa).

Positions 1–19 (MNMLLLFLHEVINGERVTL) are cleaved as a signal peptide. 5 cysteine pairs are disulfide-bonded: Cys22–Cys42, Cys25–Cys74, Cys27–Cys40, Cys49–Cys56, and Cys53–Cys65. Residues 31 to 35 (TSSSD) constitute a propeptide that is removed on maturation. Propeptides lie at residues 77–95 (PVSSSEAKQKMIKGERVTL) and 107–111 (TSSSD). 5 cysteine pairs are disulfide-bonded: Cys98–Cys118, Cys101–Cys150, Cys103–Cys116, Cys125–Cys132, and Cys129–Cys141. 2 propeptides span residues 153–171 (PVSSLEAKQNMIKEERVTL) and 183–187 (TSSSD). Cystine bridges form between Cys174/Cys194, Cys177/Cys226, Cys179/Cys192, Cys201/Cys208, and Cys205/Cys217. The propeptide occupies 229 to 246 (PVSSWEARQKIKLLQGRE).

This sequence belongs to the protease inhibitor I67 family. In terms of assembly, each inhibitor is composed of two chains, designated A and B linked by three disulfide bonds.

Functionally, weak inhibitor of cysteine proteinases. This Ananas comosus (Pineapple) protein is Bromelain inhibitor.